A 288-amino-acid chain; its full sequence is Bifunctional protein FolD 1 (288 aa).

NADP(+) contacts are provided by residues 170-172 (GPG) and Ile236.

This sequence belongs to the tetrahydrofolate dehydrogenase/cyclohydrolase family. Homodimer.

It catalyses the reaction (6R)-5,10-methylene-5,6,7,8-tetrahydrofolate + NADP(+) = (6R)-5,10-methenyltetrahydrofolate + NADPH. The enzyme catalyses (6R)-5,10-methenyltetrahydrofolate + H2O = (6R)-10-formyltetrahydrofolate + H(+). It participates in one-carbon metabolism; tetrahydrofolate interconversion. Functionally, catalyzes the oxidation of 5,10-methylenetetrahydrofolate to 5,10-methenyltetrahydrofolate and then the hydrolysis of 5,10-methenyltetrahydrofolate to 10-formyltetrahydrofolate. The chain is Bifunctional protein FolD 1 from Deinococcus geothermalis (strain DSM 11300 / CIP 105573 / AG-3a).